Here is a 120-residue protein sequence, read N- to C-terminus: MSSQSYRERTLVSVIGDDDTVTGMLLAGTGQVNENGDKNFFIITQKTTDEQIAEAFDDYTTKRKDIAIVLINQFAAERIRDRIENHVQAFPAVLEIPSKDDPYDPEKDSILRRVRKIIGE.

The protein belongs to the V-ATPase F subunit family. V-ATPase is a heteromultimeric enzyme composed of a peripheral catalytic V1 complex (components A to H) attached to an integral membrane V0 proton pore complex (components: a, c, c', c'', d, e, f and VOA1).

The protein localises to the vacuole membrane. In terms of biological role, subunit of the V1 complex of vacuolar(H+)-ATPase (V-ATPase), a multisubunit enzyme composed of a peripheral complex (V1) that hydrolyzes ATP and a membrane integral complex (V0) that translocates protons. V-ATPase is responsible for acidifying and maintaining the pH of intracellular compartments. In Schizosaccharomyces pombe (strain 972 / ATCC 24843) (Fission yeast), this protein is V-type proton ATPase subunit F.